Here is a 486-residue protein sequence, read N- to C-terminus: Glutamate--tRNA ligase (486 aa).

The 'HIGH' region signature appears at 11 to 21 (PSPTGLLHIGN). A 'KMSKS' region motif is present at residues 255-259 (KLSKR). Residue lysine 258 coordinates ATP.

This sequence belongs to the class-I aminoacyl-tRNA synthetase family. Glutamate--tRNA ligase type 1 subfamily. As to quaternary structure, monomer.

Its subcellular location is the cytoplasm. The catalysed reaction is tRNA(Glu) + L-glutamate + ATP = L-glutamyl-tRNA(Glu) + AMP + diphosphate. Catalyzes the attachment of glutamate to tRNA(Glu) in a two-step reaction: glutamate is first activated by ATP to form Glu-AMP and then transferred to the acceptor end of tRNA(Glu). This Streptococcus pneumoniae (strain Hungary19A-6) protein is Glutamate--tRNA ligase.